A 4367-amino-acid polypeptide reads, in one-letter code: Guanylate cyclase (4367 aa).

Over residues 1–10 the composition is skewed to polar residues; the sequence is MKKTRTTAAE. A disordered region spans residues 1–70; the sequence is MKKTRTTAAE…MSFLQGKHQQ (70 aa). The Cytoplasmic segment spans residues 1-150; the sequence is MKKTRTTAAE…FKNLWEQFHR (150 aa). A compositionally biased stretch (basic and acidic residues) spans 19 to 33; that stretch reads PHDEHRGRGREHGGA. Residues 54–63 are compositionally biased toward polar residues; it reads HQATQKQMSF. The chain crosses the membrane as a helical span at residues 151–171; it reads VINWWFLVMAIIQAIPQLHYN. Topologically, residues 172-174 are extracellular; that stretch reads PNH. Residues 175-195 form a helical membrane-spanning segment; the sequence is AWSTALPFAIVLVFGMLKDAF. Over 196 to 373 the chain is Cytoplasmic; sequence TDLGRRERDR…GFKRPHIEKD (178 aa). The chain crosses the membrane as a helical span at residues 374-394; sequence INTYLFISFFIVFLTILISVM. Over 395-452 the chain is Extracellular; that stretch reads SKWSVQERDSGDTGVTDAGASSGSGSSSGETSQTYGSSVEFMLGSRDLLQNPWMSILR. A disordered region spans residues 402 to 426; it reads RDSGDTGVTDAGASSGSGSSSGETS. The segment covering 407–426 has biased composition (low complexity); sequence TGVTDAGASSGSGSSSGETS. Residues 453–473 traverse the membrane as a helical segment; that stretch reads FLAVYAPVLPLSLPLILDVVY. At 474 to 2258 the chain is on the cytoplasmic side; that stretch reads LLQSVLIEGD…VHGRLSLMRV (1785 aa). Disordered stretches follow at residues 486–535, 550–699, 831–918, 932–966, 980–1047, 1079–1164, 1344–1593, 1607–1652, 1773–1861, and 1881–1946; these read IRGG…QQPL, SEKF…ISGR, ETSA…ASSL, RLEETGSQKEEDSRSDRVSLSPSEGRVSGSRPQLA, VGIQ…GELS, GMSF…MPAV, PSGT…SLKS, FRRG…TGTG, GGRG…GLRS, and DKQH…PQHL. The span at 523–535 shows a compositional bias: polar residues; the sequence is AHSSQNASLQQPL. Composition is skewed to basic and acidic residues over residues 605 to 628 and 670 to 679; these read ETLRADAEGAQERDREAEGNREQL and RRSDDRDRKS. The span at 850–863 shows a compositional bias: low complexity; sequence SAASSRSQSAPASA. A compositionally biased stretch (polar residues) spans 880–892; that stretch reads QTLTNQQTGQQSP. The segment covering 906-917 has biased composition (low complexity); it reads ASPGAADSPASS. Basic and acidic residues predominate over residues 932–948; sequence RLEETGSQKEEDSRSDR. Over residues 983–996 the composition is skewed to low complexity; sequence QSQHSSQSLLSSRQ. Residues 1025-1047 show a composition bias toward basic and acidic residues; it reads DRMYSRDYHRESRSSSPRDGELS. Composition is skewed to polar residues over residues 1084–1094 and 1117–1130; these read SRPSSQFTFSS and RSLTPPSERGTASP. The span at 1344–1357 shows a compositional bias: low complexity; the sequence is PSGTSASSGAPSGP. 2 stretches are compositionally biased toward gly residues: residues 1370 to 1381 and 1389 to 1400; these read QGQGHGSLGAPG and CLGGAGGSGARG. Residues 1443-1454 are compositionally biased toward pro residues; sequence VPSPRPLSPAGP. Basic and acidic residues predominate over residues 1527–1542; sequence SFKEKHEEFAFSKDED. Positions 1543-1567 are enriched in acidic residues; that stretch reads TATVDQDDTQSATDEEHDVEGEEEE. Low complexity predominate over residues 1583–1593; that stretch reads SASASLMSLKS. 3 stretches are compositionally biased toward polar residues: residues 1628–1652, 1779–1791, and 1843–1852; these read GRSSSVERAQQPPTHGGFSTVTGTG, VSLSRLQSNSSAK, and VNPSGQTYSQ. Residues 1881–1922 show a composition bias toward basic and acidic residues; it reads DKQHQRGHGPEGDEGSHELEGHDAHTGDSHGGHHRDQAEPRA. A compositionally biased stretch (polar residues) spans 1933–1942; sequence RLPQKTQNRL. The helical transmembrane segment at 2259–2279 threads the bilayer; sequence STVILWSFFKSLCIGLPTFLF. At 2280–2289 the chain is on the extracellular side; it reads QPQAFWSAVE. The chain crosses the membrane as a helical span at residues 2290-2310; the sequence is VYDPLLLMIVDFFWTTLPGII. At 2311-2343 the chain is on the cytoplasmic side; that stretch reads HGYSDQDLPTHLLPSVPVLYTPGRRRLYFNGFR. Residues 2344–2364 form a helical membrane-spanning segment; sequence FILWTVEGIIYSFLIFYLLQA. At 2365-2376 the chain is on the extracellular side; the sequence is TWMDGNTFHDGQ. Residues 2377–2397 form a helical membrane-spanning segment; it reads VLGFHSYGILLLFGSLLQSNV. The Cytoplasmic segment spans residues 2398–2408; sequence RIILETSLWTP. Residues 2409 to 2429 traverse the membrane as a helical segment; the sequence is TFLFTTIVLCTIMFFPTVLLY. The Extracellular segment spans residues 2430–2444; that stretch reads SVTGWPRRYMELAGR. A helical membrane pass occupies residues 2445–2465; it reads VVFAWPMLYFLIPLWVSIGIL. Over 2466–2724 the chain is Cytoplasmic; sequence VQLLLQVFTS…LKRLVPWYRV (259 aa). The chain crosses the membrane as a helical span at residues 2725-2745; it reads IFMLIALYQLLSFLTEYFIDI. Residues 2746–2762 lie on the Extracellular side of the membrane; that stretch reads HWNPGETEMEPWMCVPT. A helical transmembrane segment spans residues 2763-2783; sequence LVVEIGFAAVVVCTFYDFIFL. The Cytoplasmic portion of the chain corresponds to 2784–2785; the sequence is DH. The chain crosses the membrane as a helical span at residues 2786–2806; the sequence is FSLILNSIVFLMVSSSIVFYT. Topologically, residues 2807 to 2823 are extracellular; it reads ASHVDGTLTSVLFPVFT. A helical membrane pass occupies residues 2824–2844; the sequence is FVILRISFLQAVVWNILFLIV. The Cytoplasmic segment spans residues 2845–2858; it reads TVARFMLDKKYLPP. The chain crosses the membrane as a helical span at residues 2859-2879; that stretch reads LNFVHYIPLFIGIDVFVAFVG. At 2880 to 2903 the chain is on the extracellular side; that stretch reads YRLEYNQRKSFLLDYSVDASRRKQ. Residues 2904–2924 traverse the membrane as a helical segment; the sequence is REILNTMLPSFVVDQMINSEL. Over 2925 to 3693 the chain is Cytoplasmic; the sequence is NEEGIPTSLK…RTHFYNNKSN (769 aa). The Guanylate cyclase 1 domain occupies 2942-3150; it reads SVIFCDVYEF…DTVNTASRMK (209 aa). Disordered stretches follow at residues 3214 to 3245, 3359 to 3402, 3456 to 3475, 3485 to 3508, 3523 to 3596, and 3620 to 3653; these read DVISETGGQNGESRRSTASLPRQLETAGASSG, GQTE…SRFD, SGDEQAAGESSEADHDEVPL, QAREANEQESAKRSGGDAPPHTPT, GCAA…ETEK, and FRRRKPAAPSEAASPSSADTPMDSRVSPTSVDDE. Basic and acidic residues predominate over residues 3383 to 3402; it reads RADRRPAGRREDSRGDSRFD. Composition is skewed to basic and acidic residues over residues 3485-3499, 3529-3541, and 3549-3569; these read QAREANEQESAKRSG, EEEKTAKEGRESE, and TESRDANGQRVSERDASDARE. Positions 3626–3637 are enriched in low complexity; sequence AAPSEAASPSSA. Residues 3694 to 3714 traverse the membrane as a helical segment; that stretch reads INTIEQALIIFLVTFCVQTLT. Residues 3715-3736 lie on the Extracellular side of the membrane; the sequence is RLALPRFYVVCSHHTINLHVCT. The helical transmembrane segment at 3737–3757 threads the bilayer; sequence GLYWAVRATYTLAAFVLWMLF. Topologically, residues 3758–3772 are cytoplasmic; sequence HYRNRKEVATCLELR. The helical transmembrane segment at 3773 to 3793 threads the bilayer; that stretch reads WMVFLLNLLFISASCVFALSN. Residues 3794-3895 lie on the Extracellular side of the membrane; sequence SWGVCGQQQE…GSDLVTANGR (102 aa). The helical transmembrane segment at 3896–3916 threads the bilayer; it reads AYTYWLLSDTIELFFYIVILH. Over 3917–3921 the chain is Cytoplasmic; the sequence is HNTGL. The helical transmembrane segment at 3922–3942 threads the bilayer; the sequence is LFQNCILVDVLLMTMSLTFII. Residues 3943-3950 lie on the Extracellular side of the membrane; it reads TTARETAS. Residues 3951 to 3971 form a helical membrane-spanning segment; the sequence is TVSTIATFPCYVFFNLVSAYC. Residues 3972 to 4367 are Cytoplasmic-facing; that stretch reads KEYIDRLTFY…GSTPGSALGS (396 aa). A Guanylate cyclase 2 domain is found at 4024–4159; sequence TFLFADICGF…MDVLTGNMME (136 aa). Mg(2+) contacts are provided by Asp-4029, Ile-4030, and Asp-4073. Residues 4292-4367 form a disordered region; the sequence is ASHGDSGPSD…GSTPGSALGS (76 aa). The span at 4333–4344 shows a compositional bias: basic and acidic residues; it reads DGLKQLRKEIER. The segment covering 4356–4367 has biased composition (polar residues); sequence DIGSTPGSALGS.

This sequence in the N-terminal section; belongs to the cation transport ATPase (P-type) (TC 3.A.3) family. Type IV subfamily. The protein in the C-terminal section; belongs to the adenylyl cyclase class-4/guanylyl cyclase family. In terms of assembly, interacts with chaperone CDC50.1; the interaction regulates guanylate cyclase GC trafficking and sensing environmental changes. Interacts with UGO; the interaction regulates guanylate cyclase GC trafficking and catalytic activity. Mg(2+) serves as cofactor. Requires Mn(2+) as cofactor.

Its subcellular location is the cell membrane. It catalyses the reaction GTP = 3',5'-cyclic GMP + diphosphate. Functionally, catalyzes the synthesis of the second messenger cGMP from GTP. During the tachyzoite lytic growth cycle in host cells, detects and transduces environmental changes in potassium, phosphatidic acid and pH levels. By producing cGMP in response to these environmental changes, activates PKG and thereby regulates PKG-dependent microneme secretion which is essential for tachyzoite motility, host cell attachment invasion of and egress from host cells. May play a role in the fission of connected tachyzoites at their basal pole during egress. Does not display flippase activity towards phosphatidylserine, phosphatidic acid or phosphatidylcholine. The polypeptide is Guanylate cyclase (Toxoplasma gondii (strain ATCC 50853 / GT1)).